The chain runs to 1187 residues: Intraflagellar transport protein 122 homolog (1187 aa).

WD repeat units follow at residues 16–54, 57–97, 99–135, 137–175, 180–223, 225–264, 266–306, and 459–498; these read KVEQ…LIQP, GHKD…LKYT, NDSI…VSKH, VSSK…KVKI, GSSS…IGKD, SLTF…LGSI, EQNA…HGLY, and KQNT…LLFQ. A disordered region spans residues 1070–1094; that stretch reads KSWQEMSSGESQCLKLEDGPDDPED.

As to quaternary structure, component of the IFT complex A (IFT-A) complex.

It localises to the cell projection. The protein resides in the cilium. The protein localises to the cytoplasm. It is found in the cytoskeleton. Its subcellular location is the cilium basal body. In terms of biological role, required for cilia formation during embryonal development. Acts as a negative regulator of Shh signaling. The sequence is that of Intraflagellar transport protein 122 homolog (ift122) from Danio rerio (Zebrafish).